The sequence spans 1196 residues: Tubulin-specific chaperone D (1196 aa).

HEAT repeat units follow at residues 363–401 (VIEQ…ADDV), 599–634 (YIAM…TYAL), 752–788 (SSIA…PGFL), and 1106–1142 (GDVR…VLTY).

The protein belongs to the TBCD family. Found in a complex with at least ARL2, PPP2CB, PPP2R1A, PPP2R2A, PPP2R5E and TBCD. Interacts with PPP2CB. Part of a supercomplex made of cofactors A to E. Cofactors A and D function by capturing and stabilizing tubulin in a quasi-native conformation. Cofactor E binds to the cofactor D-tubulin complex; interaction with cofactor C then causes the release of tubulin polypeptides that are committed to the native state. Interacts with ARL2; interaction is enhanced with the GDP-bound form of ARL2. Does not interact with ARL3, ARL4A and ARL4D. Interacts with beta tubulin. Interacts with TBCE.

The protein resides in the cell junction. It is found in the tight junction. It localises to the lateral cell membrane. The protein localises to the cytoplasm. Its subcellular location is the adherens junction. The protein resides in the cytoskeleton. It is found in the microtubule organizing center. It localises to the centrosome. In terms of biological role, tubulin-folding protein implicated in the first step of the tubulin folding pathway and required for tubulin complex assembly. Involved in the regulation of microtubule polymerization or depolymerization, it modulates microtubule dynamics by capturing GTP-bound beta-tubulin (TUBB). Its ability to interact with beta tubulin is regulated via its interaction with ARL2. Acts as a GTPase-activating protein (GAP) for ARL2. Induces microtubule disruption in absence of ARL2. Increases degradation of beta tubulin, when overexpressed in polarized cells. Promotes epithelial cell detachment, a process antagonized by ARL2. Induces tight adherens and tight junctions disassembly at the lateral cell membrane. Required for correct assembly and maintenance of the mitotic spindle, and proper progression of mitosis. Involved in neuron morphogenesis. In Mus musculus (Mouse), this protein is Tubulin-specific chaperone D (Tbcd).